The sequence spans 325 residues: Melanocortin receptor 5 (325 aa).

Topologically, residues 1 to 37 (MNSSSHLTLLDLTLNASEDNILGQNVNNKSSACEDMG) are extracellular. N-linked (GlcNAc...) asparagine glycosylation is found at asparagine 2, asparagine 15, and asparagine 28. Residues 38-61 (IAVEVFLTLGLVSLLENILVIGAI) traverse the membrane as a helical segment. The Cytoplasmic portion of the chain corresponds to 62–73 (VKNKNLHSPMYF). The chain crosses the membrane as a helical span at residues 74–97 (FVGSLAVADMLVSMSNAWETITIY). The Extracellular segment spans residues 98-114 (LINNKHVVIADTFVRHI). The helical transmembrane segment at 115-138 (DNVFDSMICISVVASMCSLLAIAV) threads the bilayer. Residues 139 to 155 (DRYITIFYALRYHHIMT) lie on the Cytoplasmic side of the membrane. Residues 156-179 (ARRSGVIIACIWTFCISCGIVFII) traverse the membrane as a helical segment. Residues 180–186 (YYESKYV) lie on the Extracellular side of the membrane. The chain crosses the membrane as a helical span at residues 187 to 211 (IVCLISMFFTMLFFMVSLYIHMFLL). Over 212–239 (ARNHVKRIAASPRYNSVRQRASMKGAIT) the chain is Cytoplasmic. Residues 240–265 (LTMLLGIFIVCWSPFFLHLILMISCP) traverse the membrane as a helical segment. The Extracellular segment spans residues 266–273 (QNVYCACF). A helical membrane pass occupies residues 274–297 (MSYFNMYLILIMCNSVIDPLIYAL). Residues 298-325 (RSQEMRRTFKEIICCHGFRRTCTLLGRY) lie on the Cytoplasmic side of the membrane. Residues cysteine 311 and cysteine 312 are each lipidated (S-palmitoyl cysteine).

It belongs to the G-protein coupled receptor 1 family. As to expression, very low expression levels is detected in brain, while high levels are found in adrenals, stomach, lung and spleen.

Its subcellular location is the cell membrane. Functionally, receptor for MSH (alpha, beta and gamma) and ACTH. The activity of this receptor is mediated by G proteins which activate adenylate cyclase. This receptor is a possible mediator of the immunomodulation properties of melanocortins. In Rattus norvegicus (Rat), this protein is Melanocortin receptor 5 (Mc5r).